A 44-amino-acid chain; its full sequence is YADAIFTNSYRKILGQLSARKLLQDIMNRQQGERNQEQGAKVRL.

The residue at position 44 (Leu44) is a Leucine amide.

Belongs to the glucagon family.

The protein resides in the secreted. Functionally, GRF is released by the hypothalamus and acts on the adenohypophyse to stimulate the secretion of growth hormone. This chain is Somatoliberin (GHRH), found in Ovis aries (Sheep).